The primary structure comprises 509 residues: ATP synthase subunit alpha (509 aa).

Position 169–176 (169–176) interacts with ATP; it reads GDRQTGKT.

It belongs to the ATPase alpha/beta chains family. F-type ATPases have 2 components, CF(1) - the catalytic core - and CF(0) - the membrane proton channel. CF(1) has five subunits: alpha(3), beta(3), gamma(1), delta(1), epsilon(1). CF(0) has three main subunits: a(1), b(2) and c(9-12). The alpha and beta chains form an alternating ring which encloses part of the gamma chain. CF(1) is attached to CF(0) by a central stalk formed by the gamma and epsilon chains, while a peripheral stalk is formed by the delta and b chains.

Its subcellular location is the cell inner membrane. The enzyme catalyses ATP + H2O + 4 H(+)(in) = ADP + phosphate + 5 H(+)(out). Functionally, produces ATP from ADP in the presence of a proton gradient across the membrane. The alpha chain is a regulatory subunit. The polypeptide is ATP synthase subunit alpha (Chelativorans sp. (strain BNC1)).